The primary structure comprises 275 residues: Thioredoxin-like 1-1, chloroplastic (275 aa).

Residues 1–72 (MTEVISKTSL…GDSQDESFRR (72 aa)) constitute a chloroplast transit peptide. One can recognise a Thioredoxin domain in the interval 73 to 206 (SSAITAQTTL…FRDALAKHGP (134 aa)). Catalysis depends on nucleophile residues Cys-129 and Cys-132. An intrachain disulfide couples Cys-129 to Cys-132. A disordered region spans residues 238–275 (KPVPVEKEAATPDSNPSLPVPLPSMSSNDEKTLVSAGR). Residues 249 to 264 (PDSNPSLPVPLPSMSS) are compositionally biased toward low complexity.

It belongs to the thioredoxin family.

It localises to the plastid. The protein resides in the chloroplast. Thiol-disulfide oxidoreductase that may participate in various redox reactions. Possesses insulin disulfide bonds reducing activity. The protein is Thioredoxin-like 1-1, chloroplastic of Arabidopsis thaliana (Mouse-ear cress).